A 266-amino-acid polypeptide reads, in one-letter code: MDISASTDRLLLVVEIGNSSTSFVVFQGDQSLALQKVATNLLTTVDGVAASVEPIFAAHPMLVDAVVCSVVPQAEEAVVTYLHGSITGKVMQVNSALKLPFTLAYEDVTTFGADRLALCAWCCLSHTAYAFIALDIGTACTIDVLNSKLHYLGGMIMPGLELMARSLHEHTARLPLVDVSTVSLSLLGNSTTECMQLGIVWNFTLGLEKMIESIKMYLEYEEHDREILLVATGGAAPFVTSLFTMQCQVEELAVAHGARLLFSYNQ.

15 to 22 (EIGNSSTS) is a binding site for ATP. Substrate is bound by residues Y105 and 112–115 (GADR). D114 functions as the Proton acceptor in the catalytic mechanism. Residue D135 coordinates K(+). T138 is a binding site for ATP. Position 191 (T191) interacts with substrate.

Belongs to the type III pantothenate kinase family. Homodimer. NH4(+) is required as a cofactor. Requires K(+) as cofactor.

It is found in the cytoplasm. It catalyses the reaction (R)-pantothenate + ATP = (R)-4'-phosphopantothenate + ADP + H(+). It participates in cofactor biosynthesis; coenzyme A biosynthesis; CoA from (R)-pantothenate: step 1/5. In terms of biological role, catalyzes the phosphorylation of pantothenate (Pan), the first step in CoA biosynthesis. This is Type III pantothenate kinase from Chlorobium chlorochromatii (strain CaD3).